We begin with the raw amino-acid sequence, 338 residues long: Ferrochelatase (338 aa).

Positions 202 and 283 each coordinate Fe cation.

Belongs to the ferrochelatase family.

It is found in the cytoplasm. The enzyme catalyses heme b + 2 H(+) = protoporphyrin IX + Fe(2+). The protein operates within porphyrin-containing compound metabolism; protoheme biosynthesis; protoheme from protoporphyrin-IX: step 1/1. Catalyzes the ferrous insertion into protoporphyrin IX. In Acinetobacter baumannii (strain AB307-0294), this protein is Ferrochelatase.